Here is a 236-residue protein sequence, read N- to C-terminus: 2,3,4,5-tetrahydropyridine-2,6-dicarboxylate N-acetyltransferase (236 aa).

Belongs to the transferase hexapeptide repeat family. DapH subfamily.

It catalyses the reaction (S)-2,3,4,5-tetrahydrodipicolinate + acetyl-CoA + H2O = L-2-acetamido-6-oxoheptanedioate + CoA. It functions in the pathway amino-acid biosynthesis; L-lysine biosynthesis via DAP pathway; LL-2,6-diaminopimelate from (S)-tetrahydrodipicolinate (acetylase route): step 1/3. Catalyzes the transfer of an acetyl group from acetyl-CoA to tetrahydrodipicolinate. This chain is 2,3,4,5-tetrahydropyridine-2,6-dicarboxylate N-acetyltransferase, found in Clostridium botulinum (strain Eklund 17B / Type B).